The chain runs to 244 residues: NAD(P)H-hydrate epimerase (244 aa).

In terms of domain architecture, YjeF N-terminal spans 35–240 (IREIDSLAME…SIGVPLELLR (206 aa)). 82–86 (NNGGD) lines the (6S)-NADPHX pocket. Residues Asn-83 and Asp-150 each contribute to the K(+) site. Residues 154–160 (GTGAKPP), Tyr-165, and Asp-183 each bind (6S)-NADPHX. K(+) is bound at residue Thr-186.

The protein belongs to the NnrE/AIBP family. The cofactor is K(+).

It carries out the reaction (6R)-NADHX = (6S)-NADHX. The catalysed reaction is (6R)-NADPHX = (6S)-NADPHX. In terms of biological role, catalyzes the epimerization of the S- and R-forms of NAD(P)HX, a damaged form of NAD(P)H that is a result of enzymatic or heat-dependent hydration. This is a prerequisite for the S-specific NAD(P)H-hydrate dehydratase to allow the repair of both epimers of NAD(P)HX. The chain is NAD(P)H-hydrate epimerase from Rhodopirellula baltica (strain DSM 10527 / NCIMB 13988 / SH1).